We begin with the raw amino-acid sequence, 355 residues long: Protein RecA (355 aa).

65 to 72 serves as a coordination point for ATP; it reads GPESSGKT.

Belongs to the RecA family.

Its subcellular location is the cytoplasm. In terms of biological role, can catalyze the hydrolysis of ATP in the presence of single-stranded DNA, the ATP-dependent uptake of single-stranded DNA by duplex DNA, and the ATP-dependent hybridization of homologous single-stranded DNAs. It interacts with LexA causing its activation and leading to its autocatalytic cleavage. This Pseudomonas putida (strain GB-1) protein is Protein RecA.